The primary structure comprises 302 residues: 4-hydroxy-tetrahydrodipicolinate synthase (302 aa).

Threonine 56 provides a ligand contact to pyruvate. Catalysis depends on tyrosine 145, which acts as the Proton donor/acceptor. Lysine 173 serves as the catalytic Schiff-base intermediate with substrate. Valine 215 provides a ligand contact to pyruvate.

Belongs to the DapA family. In terms of assembly, homotetramer; dimer of dimers.

It localises to the cytoplasm. The enzyme catalyses L-aspartate 4-semialdehyde + pyruvate = (2S,4S)-4-hydroxy-2,3,4,5-tetrahydrodipicolinate + H2O + H(+). It functions in the pathway amino-acid biosynthesis; L-lysine biosynthesis via DAP pathway; (S)-tetrahydrodipicolinate from L-aspartate: step 3/4. In terms of biological role, catalyzes the condensation of (S)-aspartate-beta-semialdehyde [(S)-ASA] and pyruvate to 4-hydroxy-tetrahydrodipicolinate (HTPA). The chain is 4-hydroxy-tetrahydrodipicolinate synthase from Prochlorococcus marinus (strain MIT 9515).